The primary structure comprises 547 residues: MTRYVFITGGVVSSLGKGIASASLAAILEARGLKVTLLKLDPYINVDPGTMSPFQHGEVFVTEDGAETDLDLGHYERFVRIKTGRRNNFTTGQIYENVIRKERRGDYLGGTVQVIPHITDEIKRSIRAGAEGADIALVEIGGTVGDIESLPFLEAIRQMGVEMGHENALFIHLTLVPYIAAAGEIKTKPTQHSVKELRSIGIQPDVLLCRANQPLPEGERRKIALFTNVEERAVISAVDVDNIYKIPLWLHSQKLDEIVLRKLHIDAPPADLSDWKHVVNAMEFPEAEVTVGMVGKYVDLTESYKSLNEALTHAGIHTGTKVTIRYLDSEKLETEGAGCLEDLDAILVPGGFGERGVEGKIAAVRYARENGIPYLGICLGMQVAVIEFARHVAGLEGAHSTEFRPNTPHPVIALITEWKDREGRIEQRSADSDLGGTMRLGGQVCQLTPGTLAHQCYGSDHITERHRHRYEFNNGYLETLTAAGLVISGRSEDGSLVEVVELKDHPWFLGCQFHPEFTSTPRDGHPLFSGFIRAARAQHEKTQTKSD.

The tract at residues methionine 1–isoleucine 265 is amidoligase domain. Residue serine 13 participates in CTP binding. Residue serine 13 coordinates UTP. ATP-binding positions include serine 14–isoleucine 19 and aspartate 71. 2 residues coordinate Mg(2+): aspartate 71 and glutamate 139. CTP is bound by residues aspartate 146 to glutamate 148, lysine 186 to glutamine 191, and lysine 222. Residues lysine 186–glutamine 191 and lysine 222 each bind UTP. Residues threonine 290–lysine 541 enclose the Glutamine amidotransferase type-1 domain. Glycine 351 contacts L-glutamine. Cysteine 378 functions as the Nucleophile; for glutamine hydrolysis in the catalytic mechanism. L-glutamine contacts are provided by residues leucine 379–glutamine 382, glutamate 402, and arginine 469. Residues histidine 514 and glutamate 516 contribute to the active site.

This sequence belongs to the CTP synthase family. As to quaternary structure, homotetramer.

The catalysed reaction is UTP + L-glutamine + ATP + H2O = CTP + L-glutamate + ADP + phosphate + 2 H(+). It carries out the reaction L-glutamine + H2O = L-glutamate + NH4(+). It catalyses the reaction UTP + NH4(+) + ATP = CTP + ADP + phosphate + 2 H(+). It functions in the pathway pyrimidine metabolism; CTP biosynthesis via de novo pathway; CTP from UDP: step 2/2. With respect to regulation, allosterically activated by GTP, when glutamine is the substrate; GTP has no effect on the reaction when ammonia is the substrate. The allosteric effector GTP functions by stabilizing the protein conformation that binds the tetrahedral intermediate(s) formed during glutamine hydrolysis. Inhibited by the product CTP, via allosteric rather than competitive inhibition. In terms of biological role, catalyzes the ATP-dependent amination of UTP to CTP with either L-glutamine or ammonia as the source of nitrogen. Regulates intracellular CTP levels through interactions with the four ribonucleotide triphosphates. This Thioalkalivibrio sulfidiphilus (strain HL-EbGR7) protein is CTP synthase.